The sequence spans 603 residues: Proline--tRNA ligase (603 aa).

The protein belongs to the class-II aminoacyl-tRNA synthetase family. ProS type 1 subfamily. Homodimer.

The protein localises to the cytoplasm. It carries out the reaction tRNA(Pro) + L-proline + ATP = L-prolyl-tRNA(Pro) + AMP + diphosphate. In terms of biological role, catalyzes the attachment of proline to tRNA(Pro) in a two-step reaction: proline is first activated by ATP to form Pro-AMP and then transferred to the acceptor end of tRNA(Pro). As ProRS can inadvertently accommodate and process non-cognate amino acids such as alanine and cysteine, to avoid such errors it has two additional distinct editing activities against alanine. One activity is designated as 'pretransfer' editing and involves the tRNA(Pro)-independent hydrolysis of activated Ala-AMP. The other activity is designated 'posttransfer' editing and involves deacylation of mischarged Ala-tRNA(Pro). The misacylated Cys-tRNA(Pro) is not edited by ProRS. This Synechocystis sp. (strain ATCC 27184 / PCC 6803 / Kazusa) protein is Proline--tRNA ligase.